Reading from the N-terminus, the 67-residue chain is Alpha-actitoxin-Ms11a-3 (67 aa).

The signal sequence occupies residues 1–24; the sequence is MASKIFFVLAVFLVMSAVLPESFA. Intrachain disulfides connect C26/C41, C33/C46, and C40/C61. Lysine amide is present on K66.

The protein resides in the secreted. The protein localises to the nematocyst. Alpha-toxins act on postsynaptic membranes, they bind to the nicotinic acetylcholine receptors (nAChR) and thus inhibit them. This toxin shows inhibition against mouse alpha-1-beta-1-delta-epsilon (CHRNA1-CHRNB1-CHRND-CHRNE) (IC(50)=1215 nM), rat alpha-3-beta-4/CHRNA3-CHRNB4 (IC(50)=5.173 uM), rat alpha-7/CHRNA7 (IC(50)=4.786 uM), human alpha-7/CHRNA7 (IC(50)=8.869 uM), and rat alpha-9-alpha-10/CHRNA9-CHRNA10 (IC(50)=202 nM). Also competes with alpha-bungarotoxin for binding to orthosteric sites on muscle-type T.carlifornicus (IC(50)=256 nM) and human alpha-7/CHRNA7 nAChRs (IC(50)=19.81 uM). The sequence is that of Alpha-actitoxin-Ms11a-3 from Metridium senile (Brown sea anemone).